The following is a 388-amino-acid chain: Succinate--CoA ligase [ADP-forming] subunit beta (388 aa).

The 236-residue stretch at lysine 9–histidine 244 folds into the ATP-grasp domain. ATP is bound by residues lysine 46, glycine 53–glycine 55, glutamate 99, serine 102, and glutamate 107. Mg(2+)-binding residues include asparagine 199 and aspartate 213. Residues asparagine 264 and glycine 321–valine 323 contribute to the substrate site.

Belongs to the succinate/malate CoA ligase beta subunit family. Heterotetramer of two alpha and two beta subunits. Mg(2+) is required as a cofactor.

The catalysed reaction is succinate + ATP + CoA = succinyl-CoA + ADP + phosphate. It carries out the reaction GTP + succinate + CoA = succinyl-CoA + GDP + phosphate. It functions in the pathway carbohydrate metabolism; tricarboxylic acid cycle; succinate from succinyl-CoA (ligase route): step 1/1. Succinyl-CoA synthetase functions in the citric acid cycle (TCA), coupling the hydrolysis of succinyl-CoA to the synthesis of either ATP or GTP and thus represents the only step of substrate-level phosphorylation in the TCA. The beta subunit provides nucleotide specificity of the enzyme and binds the substrate succinate, while the binding sites for coenzyme A and phosphate are found in the alpha subunit. The sequence is that of Succinate--CoA ligase [ADP-forming] subunit beta from Vibrio cholerae serotype O1 (strain ATCC 39541 / Classical Ogawa 395 / O395).